Here is a 66-residue protein sequence, read N- to C-terminus: Large ribosomal subunit protein uL29 (66 aa).

It belongs to the universal ribosomal protein uL29 family.

This is Large ribosomal subunit protein uL29 from Thermotoga sp. (strain RQ2).